A 287-amino-acid chain; its full sequence is Outer membrane protein TP0453 (287 aa).

An N-terminal signal peptide occupies residues 1 to 24 (MIRRRYRGCTQGAWIVSVGMLFAS). Cys25 is lipidated: N-palmitoyl cysteine. A lipid anchor (S-diacylglycerol cysteine) is attached at Cys25. 9 amphipathic helix regions span residues 36 to 40 (PLGVV), 56 to 63 (ENLISRII), 69 to 77 (KADIKKIVD), 103 to 112 (YAFTNLIFSR), 155 to 162 (MSKMLSRL), 172 to 179 (PRFEKECT), 194 to 202 (GGHFITKLL), 240 to 250 (FPIQFLISRVL), and 270 to 279 (AERLASVISS).

A mix of monomer and dimers; may integrate into the membrane as a dimer. In terms of processing, palmitoylated upon expression of a fusion protein with first 46 residues fused to PhoA in E.coli.

Its subcellular location is the cell outer membrane. Its function is as follows. Might be involved in ligand transport, alters membrane permeability at acidic pH (4.0 to 5.5). Incubation of the non-lipidated form with lipid vesicles increases their permeability. The protein is Outer membrane protein TP0453 of Treponema pallidum (strain Nichols).